The sequence spans 535 residues: T-complex protein 1 subunit beta (535 aa).

Position 2 is an N-acetylalanine (alanine 2). Serine 3 carries the post-translational modification Phosphoserine. The residue at position 13 (lysine 13) is an N6-acetyllysine. Glycine 44 is an ADP binding site. Glycine 44 is a binding site for ATP. Phosphoserine is present on serine 60. Aspartate 97 contacts Mg(2+). Residues glycine 98, threonine 99, threonine 100, and serine 101 each contribute to the ADP site. Glycine 98, threonine 99, and threonine 100 together coordinate ATP. Residue lysine 154 is modified to N6-acetyllysine. ADP is bound by residues serine 168 and serine 169. Lysine 181 carries the N6-acetyllysine modification. A Glycyl lysine isopeptide (Lys-Gly) (interchain with G-Cter in SUMO2) cross-link involves residue lysine 248. Phosphoserine is present on serine 260. A Phosphothreonine modification is found at threonine 261. ADP contacts are provided by glycine 410, glutamate 495, and lysine 500. The ATP site is built by glutamate 495 and lysine 500.

It belongs to the TCP-1 chaperonin family. Component of the chaperonin-containing T-complex (TRiC), a hexadecamer composed of two identical back-to-back stacked rings enclosing a protein folding chamber. Each ring is made up of eight different subunits: TCP1/CCT1, CCT2, CCT3, CCT4, CCT5, CCT6A/CCT6, CCT7, CCT8. Interacts with PACRG. Interacts with FLCN. Interacts with DLEC1. Interacts with SVEP1.

It is found in the cytoplasm. The catalysed reaction is ATP + H2O = ADP + phosphate + H(+). In terms of biological role, component of the chaperonin-containing T-complex (TRiC), a molecular chaperone complex that assists the folding of actin, tubulin and other proteins upon ATP hydrolysis. The TRiC complex mediates the folding of WRAP53/TCAB1, thereby regulating telomere maintenance. As part of the TRiC complex may play a role in the assembly of BBSome, a complex involved in ciliogenesis regulating transports vesicles to the cilia. The polypeptide is T-complex protein 1 subunit beta (Cct2) (Rattus norvegicus (Rat)).